Here is a 1102-residue protein sequence, read N- to C-terminus: GPI inositol-deacylase (1102 aa).

A disordered region spans residues 1–90; the sequence is MHRRSSGSPV…NPPDCKSSSV (90 aa). The segment covering 58 to 70 has biased composition (polar residues); it reads GASTPRSRNSSMW. N-linked (GlcNAc...) asparagine glycosylation is present at Asn66. The segment covering 72-83 has biased composition (low complexity); sequence TPPSSSMTSNPP. The chain crosses the membrane as a helical span at residues 121–141; that stretch reads PCSILTAFTTLVASIFLFFIL. Ser308 is an active-site residue. The next 2 membrane-spanning stretches (helical) occupy residues 744–764 and 790–810; these read LVMRYRTVFAAFPLLVVALVM and SSLPMLLLAMSLLASSLATST. A glycan (N-linked (GlcNAc...) asparagine) is linked at Asn824. Transmembrane regions (helical) follow at residues 867–887, 914–934, 964–984, 1001–1021, 1033–1053, and 1056–1076; these read VALALIFLLTSIYGFLRSKSG, ILLALVSTVIPYQFAYMVACI, SIFLLMLWILPINALVLLVWA, VLSIMPFVLLVEAMTTGTMIP, MLFFFIAIYSAIYGVSYAYLL, and LTNILAAWLVGIYFSASGFSL.

The protein belongs to the GPI inositol-deacylase family.

The protein localises to the endoplasmic reticulum membrane. Functionally, involved in inositol deacylation of GPI-anchored proteins which plays important roles in the quality control and ER-associated degradation of GPI-anchored proteins. This chain is GPI inositol-deacylase (bst1), found in Aspergillus oryzae (strain ATCC 42149 / RIB 40) (Yellow koji mold).